The chain runs to 374 residues: 8-amino-7-oxononanoate synthase (374 aa).

Substrate is bound by residues Arg-22 and Arg-29. 109 to 110 contributes to the pyridoxal 5'-phosphate binding site; sequence GY. Position 134 (His-134) interacts with substrate. Residues Ser-182, 207–210, and 227–230 contribute to the pyridoxal 5'-phosphate site; these read DDAH and TLSK. Lys-230 is modified (N6-(pyridoxal phosphate)lysine). Residue Thr-339 coordinates substrate.

It belongs to the class-II pyridoxal-phosphate-dependent aminotransferase family. BioF subfamily. In terms of assembly, homodimer. Pyridoxal 5'-phosphate serves as cofactor.

It catalyses the reaction 6-carboxyhexanoyl-[ACP] + L-alanine + H(+) = (8S)-8-amino-7-oxononanoate + holo-[ACP] + CO2. It functions in the pathway cofactor biosynthesis; biotin biosynthesis. In terms of biological role, catalyzes the decarboxylative condensation of pimeloyl-[acyl-carrier protein] and L-alanine to produce 8-amino-7-oxononanoate (AON), [acyl-carrier protein], and carbon dioxide. The protein is 8-amino-7-oxononanoate synthase of Methylobacterium radiotolerans (strain ATCC 27329 / DSM 1819 / JCM 2831 / NBRC 15690 / NCIMB 10815 / 0-1).